Here is a 160-residue protein sequence, read N- to C-terminus: 2-C-methyl-D-erythritol 2,4-cyclodiphosphate synthase (160 aa).

A divalent metal cation is bound by residues D10 and H12. Residues 10–12 (DVH) and 36–37 (HS) contribute to the 4-CDP-2-C-methyl-D-erythritol 2-phosphate site. H44 contacts a divalent metal cation. 4-CDP-2-C-methyl-D-erythritol 2-phosphate contacts are provided by residues 58 to 60 (DIG), 134 to 137 (TTTE), F141, and R144.

Belongs to the IspF family. As to quaternary structure, homotrimer. It depends on a divalent metal cation as a cofactor.

The catalysed reaction is 4-CDP-2-C-methyl-D-erythritol 2-phosphate = 2-C-methyl-D-erythritol 2,4-cyclic diphosphate + CMP. It functions in the pathway isoprenoid biosynthesis; isopentenyl diphosphate biosynthesis via DXP pathway; isopentenyl diphosphate from 1-deoxy-D-xylulose 5-phosphate: step 4/6. Functionally, involved in the biosynthesis of isopentenyl diphosphate (IPP) and dimethylallyl diphosphate (DMAPP), two major building blocks of isoprenoid compounds. Catalyzes the conversion of 4-diphosphocytidyl-2-C-methyl-D-erythritol 2-phosphate (CDP-ME2P) to 2-C-methyl-D-erythritol 2,4-cyclodiphosphate (ME-CPP) with a corresponding release of cytidine 5-monophosphate (CMP). The protein is 2-C-methyl-D-erythritol 2,4-cyclodiphosphate synthase of Phocaeicola vulgatus (strain ATCC 8482 / DSM 1447 / JCM 5826 / CCUG 4940 / NBRC 14291 / NCTC 11154) (Bacteroides vulgatus).